A 47-amino-acid polypeptide reads, in one-letter code: ATP-dependent zinc metalloprotease FTSH, chloroplastic (47 aa).

In the N-terminal section; belongs to the AAA ATPase family. The protein in the C-terminal section; belongs to the peptidase M41 family. Zn(2+) serves as cofactor.

It is found in the plastid. The protein resides in the chloroplast membrane. In terms of biological role, seems to act as an ATP-dependent zinc metallopeptidase. This is ATP-dependent zinc metalloprotease FTSH, chloroplastic from Populus euphratica (Euphrates poplar).